Reading from the N-terminus, the 80-residue chain is Photosystem II extrinsic protein V (80 aa).

Residue Met-47 participates in heme binding.

It belongs to the cytochrome c family. PsbV subfamily. PSII is composed of 1 copy each of membrane proteins PsbA, PsbB, PsbC, PsbD, PsbE, PsbF, PsbH, PsbI, PsbJ, PsbK, PsbL, PsbM, PsbT, PsbY, PsbZ, Psb30/Ycf12, at least 3 peripheral proteins of the oxygen-evolving complex and a large number of cofactors. It forms dimeric complexes. Requires heme as cofactor.

It is found in the plastid. The protein localises to the chloroplast thylakoid membrane. In terms of biological role, one of the extrinsic, lumenal subunits of photosystem II (PSII). PSII is a light-driven water plastoquinone oxidoreductase, using light energy to abstract electrons from H(2)O, generating a proton gradient subsequently used for ATP formation. The extrinsic proteins stabilize the structure of photosystem II oxygen-evolving complex (OEC), the ion environment of oxygen evolution and protect the OEC against heat-induced inactivation. In Thalassiosira weissflogii (Marine diatom), this protein is Photosystem II extrinsic protein V.